The primary structure comprises 286 residues: Nucleotide-binding protein Tgr7_0722 (286 aa).

ATP is bound at residue 8–15 (GLSGSGKS). 60 to 63 (DVRS) serves as a coordination point for GTP.

The protein belongs to the RapZ-like family.

In terms of biological role, displays ATPase and GTPase activities. The polypeptide is Nucleotide-binding protein Tgr7_0722 (Thioalkalivibrio sulfidiphilus (strain HL-EbGR7)).